The primary structure comprises 469 residues: Desmin (469 aa).

Positions 2–107 (SQAYSSSQRV…QEFLTTRTNE (106 aa)) are head. Serine 7 bears the Phosphoserine; by CDK1 mark. A Phosphoserine; by AURKB modification is found at serine 12. At arginine 16 the chain carries Omega-N-methylarginine. The residue at position 17 (threonine 17) is a Phosphothreonine; by AURKB and ROCK1. A phosphoserine; by CDK1 mark is found at serine 28 and serine 32. Position 37 is an asymmetric dimethylarginine; alternate (arginine 37). Arginine 37 is modified (omega-N-methylarginine; alternate). Serine 45 bears the Phosphoserine mark. Arginine 58 carries the ADP-ribosylarginine modification. Serine 60 bears the Phosphoserine; by AURKB mark. Arginine 70 bears the Omega-N-methylarginine mark. Threonine 76 is subject to Phosphothreonine; by ROCK1. Serine 81 carries the phosphoserine modification. In terms of domain architecture, IF rod spans 107-415 (EKVELQELND…KLLEGEESRI (309 aa)). Residues 108–140 (KVELQELNDRFANYIEKVRFLEQQNAALAAEVN) form a coil 1A region. The tract at residues 141 to 150 (RLKGREPTRV) is linker 1. Positions 151 to 251 (AEIYEEELRE…HEEEIRELQA (101 aa)) are coil 1B. The tract at residues 252-267 (QLQEQQVQVEMDMSKP) is linker 12. Residues 267-414 (PDLTAALRDI…RKLLEGEESR (148 aa)) are interaction with NEB. Residues 268 to 286 (DLTAALRDIRAQYETIAAK) form a coil 2A region. Positions 287–294 (NISEAEEW) are linker 2. Serine 289, serine 357, serine 360, and serine 423 each carry phosphoserine. The interval 295-411 (YKSKVSDLTQ…ATYRKLLEGE (117 aa)) is coil 2B. Residues 412-469 (ESRINLPIQTYSALNFRETSPEQRGSEVHTKKTVMIKTIETRDGEVVSEATQQQHEVL) are tail. The interval 437-452 (SEVHTKKTVMIKTIET) is interaction with CRYAB.

The protein belongs to the intermediate filament family. Homomer. Interacts with DST. Interacts with MTM1. Interacts with EPPK1; interaction is dependent of higher-order structure of intermediate filament. Interacts with CRYAB. Interacts with NEB (via nebulin repeats 160-164). Interacts (via rod region) with NEBL (via nebulin repeats 1-5). Interacts with ASB2; the interaction targets DES for proteasomal degradation. Interacts with PKP1. Interacts with FLII. ADP-ribosylation prevents ability to form intermediate filaments. Post-translationally, phosphorylation at Ser-7, Ser-28 and Ser-32 by CDK1, phosphorylation at Ser-60 by AURKB and phosphorylation at Thr-76 by ROCK1 contribute to efficient separation of desmin intermediate filaments during mitosis. In terms of processing, ubiquitination by a SCF-like complex containing ASB2 leads to proteasomal degradation.

The protein localises to the cytoplasm. It localises to the myofibril. Its subcellular location is the sarcomere. The protein resides in the z line. It is found in the cell membrane. The protein localises to the sarcolemma. It localises to the nucleus. Its subcellular location is the cell tip. The protein resides in the nucleus envelope. Muscle-specific type III intermediate filament essential for proper muscular structure and function. Plays a crucial role in maintaining the structure of sarcomeres, inter-connecting the Z-disks and forming the myofibrils, linking them not only to the sarcolemmal cytoskeleton, but also to the nucleus and mitochondria, thus providing strength for the muscle fiber during activity. In adult striated muscle they form a fibrous network connecting myofibrils to each other and to the plasma membrane from the periphery of the Z-line structures. May act as a sarcomeric microtubule-anchoring protein: specifically associates with detyrosinated tubulin-alpha chains, leading to buckled microtubules and mechanical resistance to contraction. Required for nuclear membrane integrity, via anchoring at the cell tip and nuclear envelope, resulting in maintenance of microtubule-derived intracellular mechanical forces. Contributes to the transcriptional regulation of the NKX2-5 gene in cardiac progenitor cells during a short period of cardiomyogenesis and in cardiac side population stem cells in the adult. Plays a role in maintaining an optimal conformation of nebulette (NEB) on heart muscle sarcomeres to bind and recruit cardiac alpha-actin. The polypeptide is Desmin (DES) (Canis lupus familiaris (Dog)).